Here is a 119-residue protein sequence, read N- to C-terminus: MSDVIMVNTEYIPGKRIVKVFGTIWGITVRSRGLGGNLVAGLRSLAGGEIKEYTKMLSDARNTAMERLQSAAEQIGANAVINVRFDSSDIGQVMTEIVAYGTAVLVEDVTDNIQRVGLS.

This sequence belongs to the UPF0145 family.

This is UPF0145 protein Ta0182 from Thermoplasma acidophilum (strain ATCC 25905 / DSM 1728 / JCM 9062 / NBRC 15155 / AMRC-C165).